We begin with the raw amino-acid sequence, 474 residues long: Pyoverdine export outer membrane protein OpmQ (474 aa).

The first 17 residues, Met-1 to Ala-17, serve as a signal peptide directing secretion. A lipid anchor (N-palmitoyl cysteine) is attached at Cys-18. Cys-18 carries S-diacylglycerol cysteine lipidation.

Belongs to the outer membrane factor (OMF) (TC 1.B.17) family. In terms of assembly, part of the tripartite efflux system PvdRT-OpmQ, which is composed of an inner membrane component with both ATPase and permease domains, PvdT, a periplasmic membrane fusion protein, PvdR, and an outer membrane component, OpmQ.

Its subcellular location is the cell outer membrane. Functionally, part of the tripartite efflux system PvdRT-OpmQ required for the secretion into the extracellular milieu of the siderophore pyoverdine (PVD), which is involved in iron acquisition. The system is responsible for export of newly synthesized PVD after the final steps of biosynthesis have taken place in the periplasm. It is also responsible for recycling of PVD after internalization of ferri-PVD into the periplasm by the outer-membrane receptor FpvA and release of iron from PVD, thus making PVD available for new cycles of iron uptake. In addition, can expel unwanted metals complexed with PVD from the periplasm into the extracellular medium. In Pseudomonas aeruginosa (strain ATCC 15692 / DSM 22644 / CIP 104116 / JCM 14847 / LMG 12228 / 1C / PRS 101 / PAO1), this protein is Pyoverdine export outer membrane protein OpmQ.